A 322-amino-acid chain; its full sequence is Carnosine N-methyltransferase 2 (322 aa).

E58 is a substrate binding site. Residues G90, E119, S150, and I172 each contribute to the S-adenosyl-L-methionine site. N313 provides a ligand contact to substrate.

It belongs to the class I-like SAM-binding methyltransferase superfamily. HNMT family. In terms of assembly, monomer.

It catalyses the reaction carnosine + S-adenosyl-L-methionine = anserine + S-adenosyl-L-homocysteine + H(+). Its function is as follows. N-methyltransferase that mediates the formation of anserine (beta-alanyl-N(Pi)-methyl-L-histidine) from carnosine. Anserine, a methylated derivative of carnosine (beta-alanyl-L-histidine), is an abundant constituent of vertebrate skeletal muscles. This chain is Carnosine N-methyltransferase 2, found in Gallus gallus (Chicken).